The chain runs to 122 residues: uncharacterized protein (122 aa).

The segment at Thr-97 to Ser-122 is disordered.

This is an uncharacterized protein from Mycoplasma genitalium (strain ATCC 33530 / DSM 19775 / NCTC 10195 / G37) (Mycoplasmoides genitalium).